The following is a 157-amino-acid chain: SsrA-binding protein (157 aa).

Residues Val-132–Lys-157 are disordered. Over residues Lys-135–Lys-157 the composition is skewed to basic and acidic residues.

This sequence belongs to the SmpB family.

It is found in the cytoplasm. Its function is as follows. Required for rescue of stalled ribosomes mediated by trans-translation. Binds to transfer-messenger RNA (tmRNA), required for stable association of tmRNA with ribosomes. tmRNA and SmpB together mimic tRNA shape, replacing the anticodon stem-loop with SmpB. tmRNA is encoded by the ssrA gene; the 2 termini fold to resemble tRNA(Ala) and it encodes a 'tag peptide', a short internal open reading frame. During trans-translation Ala-aminoacylated tmRNA acts like a tRNA, entering the A-site of stalled ribosomes, displacing the stalled mRNA. The ribosome then switches to translate the ORF on the tmRNA; the nascent peptide is terminated with the 'tag peptide' encoded by the tmRNA and targeted for degradation. The ribosome is freed to recommence translation, which seems to be the essential function of trans-translation. In Francisella tularensis subsp. novicida (strain U112), this protein is SsrA-binding protein.